Consider the following 216-residue polypeptide: Holliday junction branch migration complex subunit RuvA (216 aa).

The segment at 1–64 is domain I; sequence MISFIKGVLI…EDAQQLYGFK (64 aa). The interval 65 to 143 is domain II; that stretch reads SKVDKKVFQE…KMANEIYAQT (79 aa). The interval 144–163 is flexible linker; it reads SGTTTTSQDSQAQQAPTSAV. The domain III stretch occupies residues 164 to 216; it reads LANSIFNESVDALLALGYKQKDAEKMSRSAMGDATTAAEVIRKALQGSIRSKR.

This sequence belongs to the RuvA family. As to quaternary structure, homotetramer. Forms an RuvA(8)-RuvB(12)-Holliday junction (HJ) complex. HJ DNA is sandwiched between 2 RuvA tetramers; dsDNA enters through RuvA and exits via RuvB. An RuvB hexamer assembles on each DNA strand where it exits the tetramer. Each RuvB hexamer is contacted by two RuvA subunits (via domain III) on 2 adjacent RuvB subunits; this complex drives branch migration. In the full resolvosome a probable DNA-RuvA(4)-RuvB(12)-RuvC(2) complex forms which resolves the HJ.

It is found in the cytoplasm. Functionally, the RuvA-RuvB-RuvC complex processes Holliday junction (HJ) DNA during genetic recombination and DNA repair, while the RuvA-RuvB complex plays an important role in the rescue of blocked DNA replication forks via replication fork reversal (RFR). RuvA specifically binds to HJ cruciform DNA, conferring on it an open structure. The RuvB hexamer acts as an ATP-dependent pump, pulling dsDNA into and through the RuvAB complex. HJ branch migration allows RuvC to scan DNA until it finds its consensus sequence, where it cleaves and resolves the cruciform DNA. The chain is Holliday junction branch migration complex subunit RuvA from Francisella tularensis subsp. novicida (strain U112).